The primary structure comprises 439 residues: Xylose isomerase (439 aa).

Catalysis depends on residues His-101 and Asp-104. Residues Glu-232, Glu-268, His-271, Asp-296, Asp-307, Asp-309, and Asp-339 each contribute to the Mg(2+) site.

This sequence belongs to the xylose isomerase family. As to quaternary structure, homotetramer. Mg(2+) is required as a cofactor.

Its subcellular location is the cytoplasm. It catalyses the reaction alpha-D-xylose = alpha-D-xylulofuranose. The protein is Xylose isomerase of Pseudoalteromonas atlantica (strain T6c / ATCC BAA-1087).